A 419-amino-acid chain; its full sequence is AT-hook motif nuclear-localized protein 4 (419 aa).

Disordered regions lie at residues 1–168 (MEER…SGGG), 301–337 (QQQQ…DPKA), and 382–419 (DLFS…EVPS). Residues 78-86 (KKKRGRPRK) carry the Bipartite nuclear localization signal motif. A DNA-binding region (a.T hook) is located at residues 78 to 90 (KKKRGRPRKYNPD). The segment covering 101-112 (PISSSVPLTSEF) has biased composition (polar residues). Positions 115–130 (RKRGRGRGRGRGRGRG) are enriched in basic residues. A compositionally biased stretch (low complexity) spans 136–148 (GSREPNNNNNDNN). In terms of domain architecture, PPC spans 174–314 (VSPSFTPHVL…QQIKKQRRER (141 aa)). A compositionally biased stretch (polar residues) spans 318–328 (PTTTQASNISF). Acidic residues predominate over residues 391-406 (DREEDEDDLEGEDDEE).

In terms of assembly, homodimer. Interacts with AHL3. Predominantly expressed in the stele of the root meristem with a specificity to the procambium.

Its subcellular location is the nucleus. Transcription factor that specifically binds AT-rich DNA sequences related to the nuclear matrix attachment regions (MARs). Acts redundantly with AHL3 to regulate the formation of tissue boundary between the xylem and procambium in the root meristem. Cell-to-cell movement of AHL4 from the procambium to the xylem is critical for its function in root vascular patterning. The protein is AT-hook motif nuclear-localized protein 4 of Arabidopsis thaliana (Mouse-ear cress).